Reading from the N-terminus, the 957-residue chain is Sorting nexin-13 (957 aa).

Positions 97–284 (ANIIDEPLQQ…YVIWMIRDSN (188 aa)) constitute a PXA domain. Positions 373–511 (PLDSILVDNV…SFRQNALYVR (139 aa)) constitute an RGS domain. In terms of domain architecture, PX spans 559–680 (VQLHAYISDT…DFLENKAYSK (122 aa)). Positions 601, 603, 628, and 642 each coordinate a 1,2-diacyl-sn-glycero-3-phospho-(1D-myo-inositol-3-phosphate).

This sequence belongs to the sorting nexin family.

Its subcellular location is the early endosome membrane. Functionally, may be involved in several stages of intracellular trafficking. Acts as a GAP for Galphas. May play a role in endosome homeostasis. In Mus musculus (Mouse), this protein is Sorting nexin-13 (Snx13).